The following is a 175-amino-acid chain: MIDGDGFRPNVGIVICNRDGQVLWAKRYGQHSWQFPQGGVDDGETPEQAMYRELYEEIGLKPEDVTIMATSRNWLKYRLPKRLVRWDSSPVCIGQKQKWFLLQLDPGRESRIQFGCHGHPEFDDWRWVSFWYPVRQVVSFKREVYRRVMKEFAPLAMPVPAVQVNKKDGRRNRPR.

The Nudix hydrolase domain occupies 6–150 (GFRPNVGIVI…KREVYRRVMK (145 aa)). The Nudix box signature appears at 38–59 (GGVDDGETPEQAMYRELYEEIG).

The protein belongs to the Nudix hydrolase family. RppH subfamily. A divalent metal cation is required as a cofactor.

In terms of biological role, accelerates the degradation of transcripts by removing pyrophosphate from the 5'-end of triphosphorylated RNA, leading to a more labile monophosphorylated state that can stimulate subsequent ribonuclease cleavage. This is RNA pyrophosphohydrolase from Aeromonas hydrophila subsp. hydrophila (strain ATCC 7966 / DSM 30187 / BCRC 13018 / CCUG 14551 / JCM 1027 / KCTC 2358 / NCIMB 9240 / NCTC 8049).